Reading from the N-terminus, the 101-residue chain is NAD(P)H-quinone oxidoreductase subunit 4L, chloroplastic (101 aa).

3 helical membrane passes run 2–22, 32–52, and 61–81; these read ILEH…YGLI, MCLE…SDFF, and IFSI…PAIL.

The protein belongs to the complex I subunit 4L family. NDH is composed of at least 16 different subunits, 5 of which are encoded in the nucleus.

The protein resides in the plastid. The protein localises to the chloroplast thylakoid membrane. The enzyme catalyses a plastoquinone + NADH + (n+1) H(+)(in) = a plastoquinol + NAD(+) + n H(+)(out). It catalyses the reaction a plastoquinone + NADPH + (n+1) H(+)(in) = a plastoquinol + NADP(+) + n H(+)(out). Functionally, NDH shuttles electrons from NAD(P)H:plastoquinone, via FMN and iron-sulfur (Fe-S) centers, to quinones in the photosynthetic chain and possibly in a chloroplast respiratory chain. The immediate electron acceptor for the enzyme in this species is believed to be plastoquinone. Couples the redox reaction to proton translocation, and thus conserves the redox energy in a proton gradient. This Platanus occidentalis (Sycamore) protein is NAD(P)H-quinone oxidoreductase subunit 4L, chloroplastic.